A 344-amino-acid chain; its full sequence is Flavonoid 7-O-methyltransferase 1A (344 aa).

Aspartate 211 provides a ligand contact to S-adenosyl-L-methionine. The active-site Proton acceptor is the histidine 249.

It belongs to the class I-like SAM-binding methyltransferase superfamily. Cation-independent O-methyltransferase family. In terms of assembly, homodimer.

The enzyme catalyses apigenin + S-adenosyl-L-methionine = genkwanin + S-adenosyl-L-homocysteine + H(+). It catalyses the reaction luteolin + S-adenosyl-L-methionine = luteolin 7-methyl ether + S-adenosyl-L-homocysteine + H(+). The catalysed reaction is quercetin + S-adenosyl-L-methionine = rhamnetin + S-adenosyl-L-homocysteine + H(+). It carries out the reaction (2S)-naringenin + S-adenosyl-L-methionine = (2S)-sakuranetin + S-adenosyl-L-homocysteine + H(+). The enzyme catalyses kaempferol + S-adenosyl-L-methionine = kaempferol 7-methyl ether + S-adenosyl-L-homocysteine + H(+). It catalyses the reaction isorhamnetin + S-adenosyl-L-methionine = rhamnacene + S-adenosyl-L-homocysteine + H(+). The catalysed reaction is 4',7,8-trihydroxyflavone + S-adenosyl-L-methionine = 4',8-dihydroxy-7-methoxyflavone + S-adenosyl-L-homocysteine. It carries out the reaction scutellarein + S-adenosyl-L-methionine = scutellarein 7-methyl ether + S-adenosyl-L-homocysteine. The protein operates within flavonoid metabolism. Flavonoid 7-O-methyltransferase involved in the biosynthesis of polymethoxylated flavonoids natural products such as pebrellin, aroma compounds which contribute to the flavor of peppermint, and exhibit pharmacological activities such as anti-allergic, anti-oxidant, antibacterial, anti-proliferative, and anti-inflammatory effects. Catalyzes S-adenosylmethionine-dependent regioselective 7-O-methylation of flavonoids; active on various hydroxylated flavonoid substrates, including luteolin (LUT), quercetin, kaempferol, isorhamnetin, apigenin (API), scutellarein (6-hydroxy-apigenin, 6-OH-API, SCU), 7,8,4'-trihydroxy-flavone and naringenin (NAR), and, with a lower efficiency, 7,8,3',4'-tetrahydroxy-flavone, taxifolin, hesperetin and genistein. The protein is Flavonoid 7-O-methyltransferase 1A of Mentha piperita (Peppermint).